A 174-amino-acid chain; its full sequence is uncharacterized protein (174 aa).

A signal peptide spans 1 to 31 (MCCVYRMNRPASGLTVVFCGKLSGKPGPKSA). The disordered stretch occupies residues 39 to 59 (KSGADDGGENPRFFSAGPRTE).

This is an uncharacterized protein from Escherichia coli (strain K12).